A 64-amino-acid chain; its full sequence is DNA-directed RNA polymerase subunit Rpo10 (64 aa).

Positions 7, 10, 45, and 46 each coordinate Zn(2+).

This sequence belongs to the archaeal Rpo10/eukaryotic RPB10 RNA polymerase subunit family. In terms of assembly, part of the RNA polymerase complex. Zn(2+) serves as cofactor.

It is found in the cytoplasm. It carries out the reaction RNA(n) + a ribonucleoside 5'-triphosphate = RNA(n+1) + diphosphate. Its function is as follows. DNA-dependent RNA polymerase (RNAP) catalyzes the transcription of DNA into RNA using the four ribonucleoside triphosphates as substrates. The polypeptide is DNA-directed RNA polymerase subunit Rpo10 (Haloquadratum walsbyi (strain DSM 16790 / HBSQ001)).